Reading from the N-terminus, the 304-residue chain is Mitochondrial glycine transporter (304 aa).

Solcar repeat units lie at residues Gly-3–Ala-82, Glu-106–Ala-186, and Ser-209–Arg-293. The next 6 membrane-spanning stretches (helical) occupy residues Ile-9–Gln-34, Gly-57–Val-83, Leu-108–Glu-133, Gly-161–Lys-184, Ile-213–Met-239, and Gly-268–Ile-286.

The protein belongs to the mitochondrial carrier (TC 2.A.29) family. SLC25A38 subfamily.

It localises to the mitochondrion inner membrane. It catalyses the reaction glycine(in) = glycine(out). In terms of biological role, mitochondrial glycine transporter that imports glycine into the mitochondrial matrix. Plays an important role in providing glycine for the first enzymatic step in heme biosynthesis, the condensation of glycine with succinyl-CoA to produce 5-aminolevulinate (ALA) in the mitochondrial matrix. The sequence is that of Mitochondrial glycine transporter from Yarrowia lipolytica (strain CLIB 122 / E 150) (Yeast).